The chain runs to 83 residues: Normal mucosa of esophagus-specific gene 1 protein (83 aa).

The protein belongs to the complex I NDUFA4 subunit family.

It is found in the nucleus. This is Normal mucosa of esophagus-specific gene 1 protein (Nmes1) from Rattus norvegicus (Rat).